The following is a 606-amino-acid chain: Neutral/alkaline invertase 3, chloroplastic (606 aa).

The N-terminal 58 residues, Met1–Arg58, are a transit peptide targeting the chloroplast. The disordered stretch occupies residues Arg97 to Val126.

The protein belongs to the glycosyl hydrolase 100 family.

Its subcellular location is the plastid. The protein resides in the chloroplast. It carries out the reaction Hydrolysis of terminal non-reducing beta-D-fructofuranoside residues in beta-D-fructofuranosides.. Mitochondrial invertase that cleaves sucrose into glucose and fructose. In Oryza sativa subsp. japonica (Rice), this protein is Neutral/alkaline invertase 3, chloroplastic.